The primary structure comprises 416 residues: Transcription factor PIL1 (416 aa).

3 disordered regions span residues 1 to 24 (MEAK…NIKP), 89 to 113 (VSQS…KLKS), and 197 to 231 (ESTY…KRST). The segment covering 8 to 22 (SSSSEPNMISPSSNI) has biased composition (low complexity). Residues 95 to 124 (QQDKETNEQMNNNKKKLKSSKIEFERNVSK) are a coiled coil. A compositionally biased stretch (basic residues) spans 216–229 (VHARTRKPVTKRKR). A bHLH domain is found at 229–278 (RSTEVHKLYERKRRDEFNKKMRALQDLLPNCYKDDKASLLDEAIKYMRTL).

As to quaternary structure, homodimer. Interacts with APRR1/TOC1. Associates to PTAC12/HMR/PAP5 which acts as a transcriptional coactivator. As to expression, mainly expressed in stems, fruits and flowers and, to a lower extent, in leaves, seedlings and roots. Accumulates in etiolated seedlings.

The protein resides in the nucleus. Its function is as follows. Transcription factor. Involved in responses to transient and long-term shade. Required for the light-mediated inhibition of hypocotyl elongation. Necessary for rapid light-induced expression of the photomorphogenesis- and circadian-related gene APRR9. Seems to play a role in multiple PHYB responses, such as flowering transition and petiole elongation. The protein is Transcription factor PIL1 of Arabidopsis thaliana (Mouse-ear cress).